The sequence spans 341 residues: HMG box-containing protein C10F6.08c (341 aa).

A compositionally biased stretch (basic and acidic residues) spans Ser-68–Gln-77. 2 disordered regions span residues Ser-68–Lys-195 and Leu-236–Ala-341. Composition is skewed to polar residues over residues Asp-116–Gln-157 and Asn-165–Leu-177. The span at Lys-178–Lys-195 shows a compositional bias: low complexity. The segment at residues Lys-195–Ser-263 is a DNA-binding region (HMG box). 2 stretches are compositionally biased toward basic and acidic residues: residues Glu-238–Arg-256 and Lys-269–Glu-304. 2 positions are modified to phosphothreonine: Thr-314 and Thr-315. Ser-316 is subject to Phosphoserine.

Its subcellular location is the nucleus. This is HMG box-containing protein C10F6.08c from Schizosaccharomyces pombe (strain 972 / ATCC 24843) (Fission yeast).